The chain runs to 161 residues: Cyclic pyranopterin monophosphate synthase (161 aa).

Residues 75-77 and 113-114 each bind substrate; these read LCH and ME. Aspartate 128 is a catalytic residue.

It belongs to the MoaC family. As to quaternary structure, homohexamer; trimer of dimers.

The catalysed reaction is (8S)-3',8-cyclo-7,8-dihydroguanosine 5'-triphosphate = cyclic pyranopterin phosphate + diphosphate. It participates in cofactor biosynthesis; molybdopterin biosynthesis. Catalyzes the conversion of (8S)-3',8-cyclo-7,8-dihydroguanosine 5'-triphosphate to cyclic pyranopterin monophosphate (cPMP). The sequence is that of Cyclic pyranopterin monophosphate synthase from Escherichia coli O139:H28 (strain E24377A / ETEC).